We begin with the raw amino-acid sequence, 105 residues long: Small ribosomal subunit protein uS10 (105 aa).

Belongs to the universal ribosomal protein uS10 family. In terms of assembly, part of the 30S ribosomal subunit.

In terms of biological role, involved in the binding of tRNA to the ribosomes. In Rickettsia felis (strain ATCC VR-1525 / URRWXCal2) (Rickettsia azadi), this protein is Small ribosomal subunit protein uS10.